The sequence spans 69 residues: Beta-defensin 122 (69 aa).

The N-terminal stretch at 1–19 (MKPFLVTLAVLLLFFQVTA) is a signal peptide. Disulfide bonds link Cys26/Cys53, Cys33/Cys47, and Cys37/Cys54.

The protein belongs to the beta-defensin family.

Its subcellular location is the secreted. Has antibacterial activity. This is Beta-defensin 122 (DEFB122) from Macaca mulatta (Rhesus macaque).